Reading from the N-terminus, the 1059-residue chain is Carbamoyl phosphate synthase large chain (1059 aa).

The carboxyphosphate synthetic domain stretch occupies residues 1-401 (MPKRTDIKKI…SLLKACRSLE (401 aa)). 12 residues coordinate ATP: R129, R169, G175, G176, R208, I210, E215, G241, I242, H243, Q284, and E298. The ATP-grasp 1 domain maps to 133–327 (KQLMEDLEQP…IAKLAAKIAV (195 aa)). Residues Q284, E298, and N300 each coordinate Mg(2+). Q284, E298, and N300 together coordinate Mn(2+). The tract at residues 402-546 (IGVYHNEMPE…YSTYEWENES (145 aa)) is oligomerization domain. The segment at 547 to 929 (IKSEKESVIV…ALYKAFEASY (383 aa)) is carbamoyl phosphate synthetic domain. The ATP-grasp 2 domain occupies 671–861 (EQALKDLNIP…MAQIATKLIL (191 aa)). R707, S746, L748, E752, G777, V778, H779, S780, Q820, and E832 together coordinate ATP. The Mg(2+) site is built by Q820, E832, and N834. 3 residues coordinate Mn(2+): Q820, E832, and N834. Positions 930–1059 (FHLPAFGNVI…ESRGFITQAI (130 aa)) constitute an MGS-like domain. The tract at residues 930-1059 (FHLPAFGNVI…ESRGFITQAI (130 aa)) is allosteric domain.

It belongs to the CarB family. As to quaternary structure, composed of two chains; the small (or glutamine) chain promotes the hydrolysis of glutamine to ammonia, which is used by the large (or ammonia) chain to synthesize carbamoyl phosphate. Tetramer of heterodimers (alpha,beta)4. It depends on Mg(2+) as a cofactor. Mn(2+) is required as a cofactor.

The catalysed reaction is hydrogencarbonate + L-glutamine + 2 ATP + H2O = carbamoyl phosphate + L-glutamate + 2 ADP + phosphate + 2 H(+). It catalyses the reaction hydrogencarbonate + NH4(+) + 2 ATP = carbamoyl phosphate + 2 ADP + phosphate + 2 H(+). The protein operates within amino-acid biosynthesis; L-arginine biosynthesis; carbamoyl phosphate from bicarbonate: step 1/1. Its pathway is pyrimidine metabolism; UMP biosynthesis via de novo pathway; (S)-dihydroorotate from bicarbonate: step 1/3. Large subunit of the glutamine-dependent carbamoyl phosphate synthetase (CPSase). CPSase catalyzes the formation of carbamoyl phosphate from the ammonia moiety of glutamine, carbonate, and phosphate donated by ATP, constituting the first step of 2 biosynthetic pathways, one leading to arginine and/or urea and the other to pyrimidine nucleotides. The large subunit (synthetase) binds the substrates ammonia (free or transferred from glutamine from the small subunit), hydrogencarbonate and ATP and carries out an ATP-coupled ligase reaction, activating hydrogencarbonate by forming carboxy phosphate which reacts with ammonia to form carbamoyl phosphate. The chain is Carbamoyl phosphate synthase large chain from Streptococcus mutans serotype c (strain ATCC 700610 / UA159).